A 500-amino-acid polypeptide reads, in one-letter code: Lysine--tRNA ligase (500 aa).

Glutamate 410 and glutamate 417 together coordinate Mg(2+).

The protein belongs to the class-II aminoacyl-tRNA synthetase family. In terms of assembly, homodimer. The cofactor is Mg(2+).

It localises to the cytoplasm. The enzyme catalyses tRNA(Lys) + L-lysine + ATP = L-lysyl-tRNA(Lys) + AMP + diphosphate. The protein is Lysine--tRNA ligase of Shewanella denitrificans (strain OS217 / ATCC BAA-1090 / DSM 15013).